Consider the following 267-residue polypeptide: Phosphonates import ATP-binding protein PhnC 1 (267 aa).

An ABC transporter domain is found at 3 to 247 (LSLDGVDLVH…ALDALYANEQ (245 aa)). 36–43 (GPSGAGKT) serves as a coordination point for ATP.

It belongs to the ABC transporter superfamily. Phosphonates importer (TC 3.A.1.9.1) family. In terms of assembly, the complex is composed of two ATP-binding proteins (PhnC), two transmembrane proteins (PhnE) and a solute-binding protein (PhnD).

It localises to the cell inner membrane. The catalysed reaction is phosphonate(out) + ATP + H2O = phosphonate(in) + ADP + phosphate + H(+). Functionally, part of the ABC transporter complex PhnCDE involved in phosphonates import. Responsible for energy coupling to the transport system. The protein is Phosphonates import ATP-binding protein PhnC 1 of Pseudomonas aeruginosa (strain ATCC 15692 / DSM 22644 / CIP 104116 / JCM 14847 / LMG 12228 / 1C / PRS 101 / PAO1).